The sequence spans 211 residues: Thymidylate kinase (211 aa).

11–18 contributes to the ATP binding site; that stretch reads GPDGAGKT.

This sequence belongs to the thymidylate kinase family.

The enzyme catalyses dTMP + ATP = dTDP + ADP. Phosphorylation of dTMP to form dTDP in both de novo and salvage pathways of dTTP synthesis. The polypeptide is Thymidylate kinase (Streptococcus agalactiae serotype Ia (strain ATCC 27591 / A909 / CDC SS700)).